Here is a 186-residue protein sequence, read N- to C-terminus: MMNHAVARRYARALFELAQEKGLLDQVNRELELVVSMYETDSYLRAFMNDQRISPSQKRKVLASVLEGKVSPLVLHFLYVVVQKRREPHLPSMYRAFQDLANEAMGVVEVEVRSAVPLAEETARNLEAKLTTKLGKRVKLRTQVAPELIGGLAVRVGDTLMDGSVRTRLRRMHERLISAQSNVIEG.

Belongs to the ATPase delta chain family. In terms of assembly, F-type ATPases have 2 components, F(1) - the catalytic core - and F(0) - the membrane proton channel. F(1) has five subunits: alpha(3), beta(3), gamma(1), delta(1), epsilon(1). F(0) has three main subunits: a(1), b(2) and c(10-14). The alpha and beta chains form an alternating ring which encloses part of the gamma chain. F(1) is attached to F(0) by a central stalk formed by the gamma and epsilon chains, while a peripheral stalk is formed by the delta and b chains.

The protein resides in the cell membrane. Its function is as follows. F(1)F(0) ATP synthase produces ATP from ADP in the presence of a proton or sodium gradient. F-type ATPases consist of two structural domains, F(1) containing the extramembraneous catalytic core and F(0) containing the membrane proton channel, linked together by a central stalk and a peripheral stalk. During catalysis, ATP synthesis in the catalytic domain of F(1) is coupled via a rotary mechanism of the central stalk subunits to proton translocation. In terms of biological role, this protein is part of the stalk that links CF(0) to CF(1). It either transmits conformational changes from CF(0) to CF(1) or is implicated in proton conduction. This is ATP synthase subunit delta from Symbiobacterium thermophilum (strain DSM 24528 / JCM 14929 / IAM 14863 / T).